Reading from the N-terminus, the 115-residue chain is Large ribosomal subunit protein bL19 (115 aa).

This sequence belongs to the bacterial ribosomal protein bL19 family.

Functionally, this protein is located at the 30S-50S ribosomal subunit interface and may play a role in the structure and function of the aminoacyl-tRNA binding site. The protein is Large ribosomal subunit protein bL19 of Yersinia pseudotuberculosis serotype O:1b (strain IP 31758).